The chain runs to 947 residues: Isoleucine--tRNA ligase (947 aa).

The short motif at Pro-57–His-67 is the 'HIGH' region element. L-isoleucyl-5'-AMP is bound at residue Glu-568. The 'KMSKS' region signature appears at Lys-609–Ser-613. Lys-612 provides a ligand contact to ATP. Cys-908, Cys-911, Cys-926, and Cys-929 together coordinate Zn(2+).

The protein belongs to the class-I aminoacyl-tRNA synthetase family. IleS type 1 subfamily. In terms of assembly, monomer. Zn(2+) serves as cofactor.

The protein resides in the cytoplasm. It carries out the reaction tRNA(Ile) + L-isoleucine + ATP = L-isoleucyl-tRNA(Ile) + AMP + diphosphate. Functionally, catalyzes the attachment of isoleucine to tRNA(Ile). As IleRS can inadvertently accommodate and process structurally similar amino acids such as valine, to avoid such errors it has two additional distinct tRNA(Ile)-dependent editing activities. One activity is designated as 'pretransfer' editing and involves the hydrolysis of activated Val-AMP. The other activity is designated 'posttransfer' editing and involves deacylation of mischarged Val-tRNA(Ile). The protein is Isoleucine--tRNA ligase of Persephonella marina (strain DSM 14350 / EX-H1).